A 500-amino-acid polypeptide reads, in one-letter code: Raftlin-2 (500 aa).

A lipid anchor (N-myristoyl glycine) is attached at G2. C3 carries S-palmitoyl cysteine lipidation. The tract at residues 203–236 (GHLSESGVEEEPQHESGQHQTERNSSPSYANPKR) is disordered. The segment covering 213–224 (EPQHESGQHQTE) has biased composition (basic and acidic residues). Position 404 is a phosphoserine (S404). Residues 406-500 (AQTPERKGSR…EEGVTQVTCM (95 aa)) are disordered. At T408 the chain carries Phosphothreonine. Basic and acidic residues predominate over residues 409–424 (PERKGSRLLKGEDRNK). The segment covering 426–438 (SSRSLGLDTNASQ) has biased composition (polar residues). The residue at position 429 (S429) is a Phosphoserine. Over residues 467–478 (SDSFSGFSSSDS) the composition is skewed to low complexity.

Belongs to the raftlin family. As to expression, expressed in B-cells, heart, brain, spleen, large intestine and lung. Expressed in dendritic cells and macrophages.

It localises to the cell membrane. Functionally, upon bacterial lipopolysaccharide stimulation, mediates clathrin-dependent internalization of TLR4 in dendritic cells, resulting in activation of TICAM1-mediated signaling and subsequent IFNB1 production. May regulate B-cell antigen receptor-mediated signaling. The chain is Raftlin-2 (Rftn2) from Mus musculus (Mouse).